The chain runs to 183 residues: Ubiquitin-conjugating enzyme E2-21 kDa (183 aa).

A UBC core domain is found at 17 to 179; sequence TCMSRIVKEY…VKYFLAERER (163 aa). The active-site Glycyl thioester intermediate is the Cys115.

It belongs to the ubiquitin-conjugating enzyme family.

Its subcellular location is the peroxisome. The catalysed reaction is S-ubiquitinyl-[E1 ubiquitin-activating enzyme]-L-cysteine + [E2 ubiquitin-conjugating enzyme]-L-cysteine = [E1 ubiquitin-activating enzyme]-L-cysteine + S-ubiquitinyl-[E2 ubiquitin-conjugating enzyme]-L-cysteine.. It functions in the pathway protein modification; protein ubiquitination. Functionally, catalyzes the covalent attachment of ubiquitin to other proteins. Essential for peroxisome biogenesis. Required for UBC4-independent ubiquitination of PEX5. This is Ubiquitin-conjugating enzyme E2-21 kDa (PEX4) from Saccharomyces cerevisiae (strain ATCC 204508 / S288c) (Baker's yeast).